Consider the following 507-residue polypeptide: Sensor protein CseC (507 aa).

The segment at 1–42 is disordered; that stretch reads MRGFFRQRRSVSPPGHPYDRTGPGEHAGPGARTGPGGRPRVL. Positions 25–37 are enriched in gly residues; the sequence is EHAGPGARTGPGG. 2 consecutive transmembrane segments (helical) span residues 60-80 and 183-203; these read LSAAIALVGALVAIALSLVVH and ALVIGSIAVVLGGSALGVLIG. In terms of domain architecture, HAMP spans 204–260; it reads GQLSRRLREAAAAANRVASGEPDVRVRDAIGGVVRDETDDVARAVDAMADALQQRIE. One can recognise a Histidine kinase domain in the interval 268–470; that stretch reads DIAHELRTPV…VAVLWLPEHA (203 aa). Phosphohistidine; by autocatalysis is present on His-271. A disordered region spans residues 472-507; the sequence is TNTGSYPMLPDRSKSGASSSARDMSREASQGMSRKP. Over residues 486–507 the composition is skewed to polar residues; sequence SGASSSARDMSREASQGMSRKP.

It localises to the cell membrane. The enzyme catalyses ATP + protein L-histidine = ADP + protein N-phospho-L-histidine.. Its function is as follows. Member of the two-component regulatory system CseB/CseC involved in the stability of the cell envelope, through activation of transcription of RNA polymerase sigma-E factor. CseC functions as a membrane-associated protein kinase that phosphorylates CseB in response to changes in the cell envelope. This Streptomyces coelicolor (strain ATCC BAA-471 / A3(2) / M145) protein is Sensor protein CseC (cseC).